Consider the following 303-residue polypeptide: Aspartate carbamoyltransferase catalytic subunit (303 aa).

2 residues coordinate carbamoyl phosphate: R49 and T50. K77 is a binding site for L-aspartate. Carbamoyl phosphate contacts are provided by R99, H126, and Q129. L-aspartate-binding residues include R159 and R211. Positions 252 and 253 each coordinate carbamoyl phosphate.

Belongs to the aspartate/ornithine carbamoyltransferase superfamily. ATCase family. In terms of assembly, heterododecamer (2C3:3R2) of six catalytic PyrB chains organized as two trimers (C3), and six regulatory PyrI chains organized as three dimers (R2).

It carries out the reaction carbamoyl phosphate + L-aspartate = N-carbamoyl-L-aspartate + phosphate + H(+). Its pathway is pyrimidine metabolism; UMP biosynthesis via de novo pathway; (S)-dihydroorotate from bicarbonate: step 2/3. Catalyzes the condensation of carbamoyl phosphate and aspartate to form carbamoyl aspartate and inorganic phosphate, the committed step in the de novo pyrimidine nucleotide biosynthesis pathway. In Listeria welshimeri serovar 6b (strain ATCC 35897 / DSM 20650 / CCUG 15529 / CIP 8149 / NCTC 11857 / SLCC 5334 / V8), this protein is Aspartate carbamoyltransferase catalytic subunit.